The sequence spans 197 residues: Probable chorismate pyruvate-lyase (197 aa).

The substrate site is built by R77, L115, and E176.

This sequence belongs to the UbiC family.

It is found in the cytoplasm. The enzyme catalyses chorismate = 4-hydroxybenzoate + pyruvate. The protein operates within cofactor biosynthesis; ubiquinone biosynthesis. Its function is as follows. Removes the pyruvyl group from chorismate, with concomitant aromatization of the ring, to provide 4-hydroxybenzoate (4HB) for the ubiquinone pathway. This Burkholderia ambifaria (strain ATCC BAA-244 / DSM 16087 / CCUG 44356 / LMG 19182 / AMMD) (Burkholderia cepacia (strain AMMD)) protein is Probable chorismate pyruvate-lyase.